The chain runs to 102 residues: Small integral membrane protein 29 (102 aa).

Asparagine 3 is a glycosylation site (N-linked (GlcNAc...) asparagine). The chain crosses the membrane as a helical span at residues 21–41 (VLGPFFLITLVGVVVAVVMYV).

It is found in the membrane. The protein is Small integral membrane protein 29 of Mus musculus (Mouse).